The sequence spans 141 residues: MDVRTLLETTLSGLGYELVDFELGHGGLMRVFIDAPAGIALDDCVKVSNHLTRLFTVENIDYDRLEVSSPGLDRPLTREADYARFAGERVRIKTRLPIGERKKFAGTLVGLADGQVELDIDGERVAIPLASIDKARLDPQF.

Belongs to the RimP family.

It is found in the cytoplasm. Functionally, required for maturation of 30S ribosomal subunits. This is Ribosome maturation factor RimP from Laribacter hongkongensis (strain HLHK9).